A 273-amino-acid chain; its full sequence is 4-hydroxy-tetrahydrodipicolinate reductase (273 aa).

Residues 10-15 (GAGGRM), Glu-36, 100-102 (GTT), and 124-127 (SGNM) contribute to the NAD(+) site. The active-site Proton donor/acceptor is the His-157. (S)-2,3,4,5-tetrahydrodipicolinate is bound at residue His-158. Lys-161 acts as the Proton donor in catalysis. 167–168 (GT) is a (S)-2,3,4,5-tetrahydrodipicolinate binding site.

This sequence belongs to the DapB family.

It is found in the cytoplasm. It carries out the reaction (S)-2,3,4,5-tetrahydrodipicolinate + NAD(+) + H2O = (2S,4S)-4-hydroxy-2,3,4,5-tetrahydrodipicolinate + NADH + H(+). It catalyses the reaction (S)-2,3,4,5-tetrahydrodipicolinate + NADP(+) + H2O = (2S,4S)-4-hydroxy-2,3,4,5-tetrahydrodipicolinate + NADPH + H(+). The protein operates within amino-acid biosynthesis; L-lysine biosynthesis via DAP pathway; (S)-tetrahydrodipicolinate from L-aspartate: step 4/4. Functionally, catalyzes the conversion of 4-hydroxy-tetrahydrodipicolinate (HTPA) to tetrahydrodipicolinate. This Rhodopseudomonas palustris (strain BisA53) protein is 4-hydroxy-tetrahydrodipicolinate reductase.